Reading from the N-terminus, the 114-residue chain is Transmembrane protein 14C (114 aa).

A run of 4 helical transmembrane segments spans residues L8–I28, A33–A53, V63–N83, and P89–L109.

Belongs to the TMEM14 family.

It is found in the mitochondrion membrane. In terms of biological role, required for normal heme biosynthesis. In Mus musculus (Mouse), this protein is Transmembrane protein 14C (Tmem14c).